Reading from the N-terminus, the 63-residue chain is DNA-directed RNA polymerase 7 kDa subunit (63 aa).

Belongs to the poxviridae DNA-directed RNA polymerase 7 kDa subunit family. The DNA-dependent RNA polymerase (vRNAP) consists of eight subunits encoded by early viral genes and termed according to their apparent molecular masses Rpo147, Rpo132, Rpo35, Rpo30, Rpo22, Rpo19, Rpo18, and Rpo7. The same holoenzyme, with the addition of the transcription-specificity factor RAP94, is used for early gene expression.

The protein localises to the virion. It carries out the reaction RNA(n) + a ribonucleoside 5'-triphosphate = RNA(n+1) + diphosphate. Part of the DNA-dependent RNA polymerase which catalyzes the transcription of viral DNA into RNA using the four ribonucleoside triphosphates as substrates. Responsible for the transcription of early, intermediate and late genes. DNA-dependent RNA polymerase associates with the early transcription factor (ETF), itself composed of OPG118 and OPG134, thereby allowing the early genes transcription. Late transcription, and probably also intermediate transcription, require newly synthesized RNA polymerase. The sequence is that of DNA-directed RNA polymerase 7 kDa subunit (OPG090) from Homo sapiens (Human).